Consider the following 62-residue polypeptide: Large ribosomal subunit protein uL30 (62 aa).

It belongs to the universal ribosomal protein uL30 family. As to quaternary structure, part of the 50S ribosomal subunit.

This is Large ribosomal subunit protein uL30 from Dinoroseobacter shibae (strain DSM 16493 / NCIMB 14021 / DFL 12).